Here is a 231-residue protein sequence, read N- to C-terminus: Isoprenyl transferase (231 aa).

D14 is an active-site residue. Residue D14 coordinates Mg(2+). Substrate contacts are provided by residues 15–18 (GNGR), W19, R27, H31, and 59–61 (STE). Catalysis depends on N62, which acts as the Proton acceptor. Substrate contacts are provided by residues W63, R65, R176, and 182 to 184 (RIS). E195 contacts Mg(2+).

It belongs to the UPP synthase family. As to quaternary structure, homodimer. The cofactor is Mg(2+).

Catalyzes the condensation of isopentenyl diphosphate (IPP) with allylic pyrophosphates generating different type of terpenoids. The polypeptide is Isoprenyl transferase (Aquifex pyrophilus).